Here is a 142-residue protein sequence, read N- to C-terminus: Large ribosomal subunit protein uL13 (142 aa).

The protein belongs to the universal ribosomal protein uL13 family. Part of the 50S ribosomal subunit.

Functionally, this protein is one of the early assembly proteins of the 50S ribosomal subunit, although it is not seen to bind rRNA by itself. It is important during the early stages of 50S assembly. The protein is Large ribosomal subunit protein uL13 of Bordetella bronchiseptica (strain ATCC BAA-588 / NCTC 13252 / RB50) (Alcaligenes bronchisepticus).